The sequence spans 99 residues: Aspartyl/glutamyl-tRNA(Asn/Gln) amidotransferase subunit C (99 aa).

Belongs to the GatC family. In terms of assembly, heterotrimer of A, B and C subunits.

It catalyses the reaction L-glutamyl-tRNA(Gln) + L-glutamine + ATP + H2O = L-glutaminyl-tRNA(Gln) + L-glutamate + ADP + phosphate + H(+). The catalysed reaction is L-aspartyl-tRNA(Asn) + L-glutamine + ATP + H2O = L-asparaginyl-tRNA(Asn) + L-glutamate + ADP + phosphate + 2 H(+). In terms of biological role, allows the formation of correctly charged Asn-tRNA(Asn) or Gln-tRNA(Gln) through the transamidation of misacylated Asp-tRNA(Asn) or Glu-tRNA(Gln) in organisms which lack either or both of asparaginyl-tRNA or glutaminyl-tRNA synthetases. The reaction takes place in the presence of glutamine and ATP through an activated phospho-Asp-tRNA(Asn) or phospho-Glu-tRNA(Gln). The polypeptide is Aspartyl/glutamyl-tRNA(Asn/Gln) amidotransferase subunit C (Cupriavidus necator (strain ATCC 17699 / DSM 428 / KCTC 22496 / NCIMB 10442 / H16 / Stanier 337) (Ralstonia eutropha)).